The following is a 157-amino-acid chain: uncharacterized protein (157 aa).

An N-terminal signal peptide occupies residues 1 to 23 (MEALRRAHEATLRLLLCRPWASG).

Its subcellular location is the secreted. This is an uncharacterized protein from Mus musculus (Mouse).